The chain runs to 201 residues: Potassium-transporting ATPase KdpC subunit (201 aa).

The helical transmembrane segment at 7-29 threads the bilayer; sequence PALVLLTALTAITGLAYPLAMTG.

The protein belongs to the KdpC family. The system is composed of three essential subunits: KdpA, KdpB and KdpC.

The protein resides in the cell inner membrane. In terms of biological role, part of the high-affinity ATP-driven potassium transport (or Kdp) system, which catalyzes the hydrolysis of ATP coupled with the electrogenic transport of potassium into the cytoplasm. This subunit acts as a catalytic chaperone that increases the ATP-binding affinity of the ATP-hydrolyzing subunit KdpB by the formation of a transient KdpB/KdpC/ATP ternary complex. The protein is Potassium-transporting ATPase KdpC subunit of Methylorubrum populi (strain ATCC BAA-705 / NCIMB 13946 / BJ001) (Methylobacterium populi).